We begin with the raw amino-acid sequence, 138 residues long: Large ribosomal subunit protein bL19 (138 aa).

Belongs to the bacterial ribosomal protein bL19 family.

This protein is located at the 30S-50S ribosomal subunit interface and may play a role in the structure and function of the aminoacyl-tRNA binding site. This is Large ribosomal subunit protein bL19 from Leptospira interrogans serogroup Icterohaemorrhagiae serovar Lai (strain 56601).